The following is a 418-amino-acid chain: Protein YdhQ (418 aa).

This is Protein YdhQ (ydhQ) from Escherichia coli (strain K12).